A 74-amino-acid polypeptide reads, in one-letter code: Exodeoxyribonuclease 7 small subunit (74 aa).

It belongs to the XseB family. As to quaternary structure, heterooligomer composed of large and small subunits.

Its subcellular location is the cytoplasm. The enzyme catalyses Exonucleolytic cleavage in either 5'- to 3'- or 3'- to 5'-direction to yield nucleoside 5'-phosphates.. In terms of biological role, bidirectionally degrades single-stranded DNA into large acid-insoluble oligonucleotides, which are then degraded further into small acid-soluble oligonucleotides. The chain is Exodeoxyribonuclease 7 small subunit from Thermotoga neapolitana (strain ATCC 49049 / DSM 4359 / NBRC 107923 / NS-E).